The primary structure comprises 108 residues: Phosphoribosyl-ATP pyrophosphatase (108 aa).

This sequence belongs to the PRA-PH family.

It is found in the cytoplasm. The catalysed reaction is 1-(5-phospho-beta-D-ribosyl)-ATP + H2O = 1-(5-phospho-beta-D-ribosyl)-5'-AMP + diphosphate + H(+). The protein operates within amino-acid biosynthesis; L-histidine biosynthesis; L-histidine from 5-phospho-alpha-D-ribose 1-diphosphate: step 2/9. The protein is Phosphoribosyl-ATP pyrophosphatase of Geobacter sulfurreducens (strain ATCC 51573 / DSM 12127 / PCA).